The following is a 303-amino-acid chain: Monoglyceride lipase (303 aa).

Thr-10 bears the Phosphothreonine mark. The residue at position 58 (Tyr-58) is a 3'-nitrotyrosine. Residue Ser-122 is the Nucleophile of the active site. Active-site charge relay system residues include Asp-239 and His-269.

This sequence belongs to the AB hydrolase superfamily. Monoacylglycerol lipase family. As to quaternary structure, homodimer. As to expression, detected in adipose tissue, lung, liver, kidney, brain and heart.

The protein resides in the cytoplasm. The protein localises to the cytosol. It localises to the membrane. The enzyme catalyses Hydrolyzes glycerol monoesters of long-chain fatty acids.. It carries out the reaction a 1-acylglycerol + H2O = glycerol + a fatty acid + H(+). It catalyses the reaction a 2-acylglycerol + H2O = glycerol + a fatty acid + H(+). The catalysed reaction is 1-octanoylglycerol + H2O = octanoate + glycerol + H(+). The enzyme catalyses 2-(5Z,8Z,11Z,14Z-eicosatetraenoyl)-glycerol + H2O = glycerol + (5Z,8Z,11Z,14Z)-eicosatetraenoate + H(+). It carries out the reaction 1-decanoylglycerol + H2O = decanoate + glycerol + H(+). It catalyses the reaction 1-dodecanoylglycerol + H2O = dodecanoate + glycerol + H(+). The catalysed reaction is 1-tetradecanoylglycerol + H2O = tetradecanoate + glycerol + H(+). The enzyme catalyses 2-hexadecanoylglycerol + H2O = glycerol + hexadecanoate + H(+). It carries out the reaction 1-(9Z-octadecenoyl)-glycerol + H2O = glycerol + (9Z)-octadecenoate + H(+). It catalyses the reaction 2-(9Z-octadecenoyl)-glycerol + H2O = glycerol + (9Z)-octadecenoate + H(+). The catalysed reaction is 2-(9Z,12Z-octadecadienoyl)-glycerol + H2O = (9Z,12Z)-octadecadienoate + glycerol + H(+). The enzyme catalyses 1-(5Z,8Z,11Z,14Z-eicosatetraenoyl)-glycerol + H2O = glycerol + (5Z,8Z,11Z,14Z)-eicosatetraenoate + H(+). It carries out the reaction 1-(9Z,12Z-octadecadienoyl)-glycerol + H2O = (9Z,12Z)-octadecadienoate + glycerol + H(+). It catalyses the reaction 1-hexadecanoylglycerol + H2O = glycerol + hexadecanoate + H(+). The catalysed reaction is 1-octadecanoylglycerol + H2O = octadecanoate + glycerol + H(+). The enzyme catalyses prostaglandin E2 1-glyceryl ester + H2O = prostaglandin E2 + glycerol + H(+). It carries out the reaction prostaglandin D2-1-glycerol ester + H2O = prostaglandin D2 + glycerol + H(+). It catalyses the reaction 2-glyceryl-15-deoxy-Delta(12,14)-prostaglandin J2 + H2O = 15-deoxy-Delta(12,14)-prostaglandin J2 + glycerol + H(+). The catalysed reaction is prostaglandin F2alpha 1-glyceryl ester + H2O = prostaglandin F2alpha + glycerol + H(+). Its pathway is glycerolipid metabolism; triacylglycerol degradation. Functionally, converts monoacylglycerides to free fatty acids and glycerol. Hydrolyzes the endocannabinoid 2-arachidonoylglycerol, and thereby contributes to the regulation of endocannabinoid signaling, nociperception and perception of pain. Regulates the levels of fatty acids that serve as signaling molecules and promote cancer cell migration, invasion and tumor growth. This chain is Monoglyceride lipase, found in Homo sapiens (Human).